Reading from the N-terminus, the 1108-residue chain is Probable E3 ubiquitin ligase SUD1 (1108 aa).

The interval 1–60 (MEISPADSLSISGAAASEVVSEPSVSSSSSSSSPNQASPNPFSNMDPAVSTATGSRYVDD) is disordered. The segment covering 10 to 44 (SISGAAASEVVSEPSVSSSSSSSSPNQASPNPFSN) has biased composition (low complexity). An RING-CH-type zinc finger spans residues 60–121 (DDEDEEDVCR…EVCKHPFSFS (62 aa)). Cysteine 68, cysteine 71, cysteine 85, cysteine 87, histidine 95, cysteine 98, cysteine 111, and cysteine 114 together coordinate Zn(2+). The next 2 helical transmembrane spans lie at 157–177 (FVLS…WRLA) and 197–217 (VILT…FIFL). Residues 237–246 (ERDDDVDRNG) are compositionally biased toward basic and acidic residues. The tract at residues 237–273 (ERDDDVDRNGARAARRPAGQANRNLAGEGNGEDAGDQ) is disordered. The stretch at 286–308 (ENVLARLDIQAARLEAQVEQMFD) forms a coiled coil. 8 consecutive transmembrane segments (helical) span residues 339–359 (FTVL…PFTL), 362–382 (IILY…VAAS), 462–482 (AVGY…IALI), 489–509 (PLTV…PSLL), 525–545 (VAFL…WWLD), 572–592 (LVHW…VSLL), 630–650 (VLLS…LPVK), and 669–689 (PFTE…FIIE). The segment at 762–784 (PNRSRLRAGNVNTGEEYEDDDEQ) is disordered. 6 helical membrane-spanning segments follow: residues 796–816 (IILL…ALIV), 844–864 (YAFV…RYAI), 894–914 (AIWV…LVIV), 923–943 (SPVF…KIWT), 982–1002 (EIVF…YVLA), and 1017–1036 (SAVY…FCFC).

Expressed in cotyledons, leaves, roots, stems, inflorescences and siliques. Expression higher at the top than at the base of the stem.

The protein resides in the membrane. The catalysed reaction is S-ubiquitinyl-[E2 ubiquitin-conjugating enzyme]-L-cysteine + [acceptor protein]-L-lysine = [E2 ubiquitin-conjugating enzyme]-L-cysteine + N(6)-ubiquitinyl-[acceptor protein]-L-lysine.. The protein operates within protein modification; protein ubiquitination. In terms of biological role, probable E3 ubiquitin ligase acting as a positive post-transcriptional regulator of 3-hydroxy-3-methylglutaryl-coenzyme A reductase activity. Might be involved in the quality control that degrades misfolded proteins. The sequence is that of Probable E3 ubiquitin ligase SUD1 (SUD1) from Arabidopsis thaliana (Mouse-ear cress).